A 537-amino-acid polypeptide reads, in one-letter code: Copine-3 (537 aa).

C2 domains lie at 1–115 and 124–247; these read MAAQ…TRPL and GKGS…PVEF. A Phosphoserine modification is found at S14. Residues D22, D28, D81, D83, D93, D154, and D160 each coordinate Ca(2+). Residue S197 is modified to Phosphoserine. Ca(2+) contacts are provided by D216, D218, and D224. S243 is subject to Phosphoserine. The 223-residue stretch at 291 to 513 folds into the VWFA domain; sequence NFTVGVDFTG…AQCVLAEIPQ (223 aa).

Belongs to the copine family. In terms of assembly, monomer. Interacts with ERBB2 (preferentially with the tyrosine phosphorylated form); this interaction occurs at the cell membrane and is increased in a growth factor heregulin-dependent manner. Interacts with SHC1; this interaction may mediate the binding of CPNE3 with ERBB2. Interacts with RACK1. It depends on Ca(2+) as a cofactor. Post-translationally, phosphorylated on serine and threonine residues. Expressed in breast and weakly in prostate and ovarian tissues. Expressed in neutrophils (at protein level). Widely expressed. Expressed in the brain. Expressed in neutrophil precursors from the bone marrow and peripheral blood. Expressed in primary breast tumors and ovarian endometrioid adenocarcinoma.

It is found in the nucleus. Its subcellular location is the cytoplasm. It localises to the cell membrane. The protein localises to the cell junction. The protein resides in the focal adhesion. Its function is as follows. Calcium-dependent phospholipid-binding protein that plays a role in ERBB2-mediated tumor cell migration in response to growth factor heregulin stimulation. This is Copine-3 from Homo sapiens (Human).